A 178-amino-acid chain; its full sequence is Large ribosomal subunit protein uL6 (178 aa).

It belongs to the universal ribosomal protein uL6 family. In terms of assembly, part of the 50S ribosomal subunit.

Functionally, this protein binds to the 23S rRNA, and is important in its secondary structure. It is located near the subunit interface in the base of the L7/L12 stalk, and near the tRNA binding site of the peptidyltransferase center. The sequence is that of Large ribosomal subunit protein uL6 from Enterococcus faecalis (strain ATCC 700802 / V583).